An 828-amino-acid chain; its full sequence is Periplasmic nitrate reductase (828 aa).

Positions Met-1–Ala-31 form a signal peptide, tat-type signal. The 4Fe-4S Mo/W bis-MGD-type domain occupies Ile-39 to Asp-95. Positions 46, 49, 53, and 81 each coordinate [4Fe-4S] cluster. Mo-bis(molybdopterin guanine dinucleotide) is bound by residues Lys-83, Gln-150, Asn-175, Cys-179, Trp-212–Met-219, Ser-243–His-247, Gln-262–Asp-264, Met-372, Gln-376, Asn-482, Ser-508–Asp-509, Lys-531, Asp-558, and Thr-718–Thr-727. Position 794 (Phe-794) interacts with substrate. 2 residues coordinate Mo-bis(molybdopterin guanine dinucleotide): Asn-802 and Lys-819.

Belongs to the prokaryotic molybdopterin-containing oxidoreductase family. NasA/NapA/NarB subfamily. As to quaternary structure, component of the periplasmic nitrate reductase NapAB complex composed of NapA and NapB. The cofactor is [4Fe-4S] cluster. Mo-bis(molybdopterin guanine dinucleotide) serves as cofactor. Post-translationally, predicted to be exported by the Tat system. The position of the signal peptide cleavage has not been experimentally proven.

Its subcellular location is the periplasm. The enzyme catalyses 2 Fe(II)-[cytochrome] + nitrate + 2 H(+) = 2 Fe(III)-[cytochrome] + nitrite + H2O. Its function is as follows. Catalytic subunit of the periplasmic nitrate reductase complex NapAB. Receives electrons from NapB and catalyzes the reduction of nitrate to nitrite. The sequence is that of Periplasmic nitrate reductase from Escherichia coli O1:K1 / APEC.